The following is a 363-amino-acid chain: Phosphoserine aminotransferase (363 aa).

Arg-42 provides a ligand contact to L-glutamate. Pyridoxal 5'-phosphate contacts are provided by residues 76–77 (GR), Trp-102, Thr-156, Asp-175, and Gln-198. Lys-199 carries the post-translational modification N6-(pyridoxal phosphate)lysine. 240 to 241 (NT) lines the pyridoxal 5'-phosphate pocket.

This sequence belongs to the class-V pyridoxal-phosphate-dependent aminotransferase family. SerC subfamily. Homodimer. Pyridoxal 5'-phosphate is required as a cofactor.

Its subcellular location is the cytoplasm. It carries out the reaction O-phospho-L-serine + 2-oxoglutarate = 3-phosphooxypyruvate + L-glutamate. The catalysed reaction is 4-(phosphooxy)-L-threonine + 2-oxoglutarate = (R)-3-hydroxy-2-oxo-4-phosphooxybutanoate + L-glutamate. It participates in amino-acid biosynthesis; L-serine biosynthesis; L-serine from 3-phospho-D-glycerate: step 2/3. Its pathway is cofactor biosynthesis; pyridoxine 5'-phosphate biosynthesis; pyridoxine 5'-phosphate from D-erythrose 4-phosphate: step 3/5. Functionally, catalyzes the reversible conversion of 3-phosphohydroxypyruvate to phosphoserine and of 3-hydroxy-2-oxo-4-phosphonooxybutanoate to phosphohydroxythreonine. The sequence is that of Phosphoserine aminotransferase from Shewanella baltica (strain OS195).